Consider the following 122-residue polypeptide: uncharacterized protein (122 aa).

The next 4 membrane-spanning stretches (helical) occupy residues 7–27 (IVAI…IFCD), 29–49 (LVLA…LGWI), 62–82 (AITG…SKNP), and 89–109 (KEIF…YFGY).

It localises to the cell membrane. This is an uncharacterized protein from Methanocaldococcus jannaschii (strain ATCC 43067 / DSM 2661 / JAL-1 / JCM 10045 / NBRC 100440) (Methanococcus jannaschii).